Consider the following 312-residue polypeptide: DNA-directed RNA polymerase subunit alpha (312 aa).

The segment at 1-226 (MIEFEKPNIT…EHLDLFTDLT (226 aa)) is alpha N-terminal domain (alpha-NTD). The segment at 244 to 312 (DHVLERTIEE…DLGLGLKNDK (69 aa)) is alpha C-terminal domain (alpha-CTD).

The protein belongs to the RNA polymerase alpha chain family. Homodimer. The RNAP catalytic core consists of 2 alpha, 1 beta, 1 beta' and 1 omega subunit. When a sigma factor is associated with the core the holoenzyme is formed, which can initiate transcription.

It carries out the reaction RNA(n) + a ribonucleoside 5'-triphosphate = RNA(n+1) + diphosphate. DNA-dependent RNA polymerase catalyzes the transcription of DNA into RNA using the four ribonucleoside triphosphates as substrates. The sequence is that of DNA-directed RNA polymerase subunit alpha from Streptococcus gordonii (strain Challis / ATCC 35105 / BCRC 15272 / CH1 / DL1 / V288).